We begin with the raw amino-acid sequence, 255 residues long: Small ribosomal subunit protein eS1 (255 aa).

Position 2 is an N-acetylalanine; partial (Ala2).

The protein belongs to the eukaryotic ribosomal protein eS1 family. In terms of assembly, component of the small ribosomal subunit. Mature ribosomes consist of a small (40S) and a large (60S) subunit. The 40S subunit contains about 33 different proteins and 1 molecule of RNA (18S). The 60S subunit contains about 49 different proteins and 3 molecules of RNA (25S, 5.8S and 5S).

It localises to the cytoplasm. The chain is Small ribosomal subunit protein eS1 from Kluyveromyces lactis (strain ATCC 8585 / CBS 2359 / DSM 70799 / NBRC 1267 / NRRL Y-1140 / WM37) (Yeast).